A 986-amino-acid polypeptide reads, in one-letter code: Bifunctional glutamine synthetase adenylyltransferase/adenylyl-removing enzyme (986 aa).

The segment at 1 to 471 is adenylyl removase; that stretch reads MAEAIERSLS…RYAQLFEQEA (471 aa). Residues 475 to 986 form an adenylyl transferase region; the sequence is TETGNLVFTG…RIFQGVVAAA (512 aa).

The protein belongs to the GlnE family. It depends on Mg(2+) as a cofactor.

The catalysed reaction is [glutamine synthetase]-O(4)-(5'-adenylyl)-L-tyrosine + phosphate = [glutamine synthetase]-L-tyrosine + ADP. It catalyses the reaction [glutamine synthetase]-L-tyrosine + ATP = [glutamine synthetase]-O(4)-(5'-adenylyl)-L-tyrosine + diphosphate. In terms of biological role, involved in the regulation of glutamine synthetase GlnA, a key enzyme in the process to assimilate ammonia. When cellular nitrogen levels are high, the C-terminal adenylyl transferase (AT) inactivates GlnA by covalent transfer of an adenylyl group from ATP to specific tyrosine residue of GlnA, thus reducing its activity. Conversely, when nitrogen levels are low, the N-terminal adenylyl removase (AR) activates GlnA by removing the adenylyl group by phosphorolysis, increasing its activity. The regulatory region of GlnE binds the signal transduction protein PII (GlnB) which indicates the nitrogen status of the cell. This is Bifunctional glutamine synthetase adenylyltransferase/adenylyl-removing enzyme from Rhizobium meliloti (strain 1021) (Ensifer meliloti).